A 251-amino-acid polypeptide reads, in one-letter code: Pyrroloquinoline-quinone synthase (251 aa).

Belongs to the PqqC family.

The enzyme catalyses 6-(2-amino-2-carboxyethyl)-7,8-dioxo-1,2,3,4,7,8-hexahydroquinoline-2,4-dicarboxylate + 3 O2 = pyrroloquinoline quinone + 2 H2O2 + 2 H2O + H(+). It functions in the pathway cofactor biosynthesis; pyrroloquinoline quinone biosynthesis. Its function is as follows. Ring cyclization and eight-electron oxidation of 3a-(2-amino-2-carboxyethyl)-4,5-dioxo-4,5,6,7,8,9-hexahydroquinoline-7,9-dicarboxylic-acid to PQQ. The polypeptide is Pyrroloquinoline-quinone synthase (Pseudomonas syringae pv. syringae (strain B728a)).